The chain runs to 330 residues: Phenylalanine--tRNA ligase alpha subunit (330 aa).

E255 provides a ligand contact to Mg(2+).

This sequence belongs to the class-II aminoacyl-tRNA synthetase family. Phe-tRNA synthetase alpha subunit type 1 subfamily. Tetramer of two alpha and two beta subunits. It depends on Mg(2+) as a cofactor.

The protein localises to the cytoplasm. The catalysed reaction is tRNA(Phe) + L-phenylalanine + ATP = L-phenylalanyl-tRNA(Phe) + AMP + diphosphate + H(+). The chain is Phenylalanine--tRNA ligase alpha subunit from Acinetobacter baumannii (strain SDF).